The sequence spans 376 residues: 1-acyl-sn-glycerol-3-phosphate acyltransferase gamma (376 aa).

Residues 1-124 (MGLLAYLKTQ…LGSSKVLAKR (124 aa)) are Cytoplasmic-facing. The HXXXXD motif signature appears at 96–101 (HNFEID). The chain crosses the membrane as a helical span at residues 125–145 (ELLCVPLIGWTWYFLEIVFCK). The Lumenal segment spans residues 146–316 (RKWEEDRDTV…TLLNFLCWAT (171 aa)). The helical transmembrane segment at 317-339 (ILLSPLFSFVLGVFASGSPLLIL) threads the bilayer. Over 340–376 (TFLGFVGAASFGVRRLIGVTEIEKGSSYGNQELKKKE) the chain is Cytoplasmic.

It belongs to the 1-acyl-sn-glycerol-3-phosphate acyltransferase family. In terms of tissue distribution, widely expressed. Mainly expressed in testis, kidney and liver (at protein level).

The protein resides in the endoplasmic reticulum membrane. The protein localises to the nucleus envelope. The catalysed reaction is a 1-acyl-sn-glycero-3-phosphate + an acyl-CoA = a 1,2-diacyl-sn-glycero-3-phosphate + CoA. It carries out the reaction pentadecanoyl-CoA + 1-(9Z-octadecenoyl)-sn-glycero-3-phosphate = 1-(9Z)-octadecenoyl-2-pentadecanoyl-sn-glycero-3-phosphate + CoA. The enzyme catalyses heptadecanoyl-CoA + 1-(9Z-octadecenoyl)-sn-glycero-3-phosphate = 1-(9Z)-octadecenoyl-2-heptadecanoyl-sn-glycero-3-phosphate + CoA. It catalyses the reaction 1-(9Z-octadecenoyl)-sn-glycero-3-phosphate + octadecanoyl-CoA = 1-(9Z-octadecenoyl)-2-octadecanoyl-sn-glycero-3-phosphate + CoA. The catalysed reaction is nonadecanoyl-CoA + 1-(9Z-octadecenoyl)-sn-glycero-3-phosphate = 1-(9Z)-octadecenoyl-2-nonadecanoyl-sn-glycero-3-phosphate + CoA. It carries out the reaction 1-(9Z-octadecenoyl)-sn-glycero-3-phosphate + (5Z,8Z,11Z,14Z)-eicosatetraenoyl-CoA = 1-(9Z)-octadecenoyl-2-(5Z,8Z,11Z,14Z)-eicosatetraenoyl-sn-glycero-3-phosphate + CoA. The enzyme catalyses 1-(9Z-octadecenoyl)-sn-glycero-3-phosphate + (9Z)-octadecenoyl-CoA = 1,2-di-(9Z-octadecenoyl)-sn-glycero-3-phosphate + CoA. It catalyses the reaction 1-(9Z-octadecenoyl)-sn-glycero-3-phosphate + (9Z,12Z)-octadecadienoyl-CoA = 1-(9Z)-octadecenoyl-2-(9Z,12Z)-octadecadienoyl-sn-glycero-3-phosphate + CoA. The catalysed reaction is 1-(9Z-octadecenoyl)-sn-glycero-3-phosphocholine + (5Z,8Z,11Z,14Z)-eicosatetraenoyl-CoA = 1-(9Z)-octadecenoyl-2-(5Z,8Z,11Z,14Z)-icosatetraenoyl-sn-glycero-3-phosphocholine + CoA. It carries out the reaction 1-(9Z-octadecenoyl)-sn-glycero-3-phospho-(1D-myo-inositol) + (5Z,8Z,11Z,14Z)-eicosatetraenoyl-CoA = 1-(9Z-octadecenoyl)-2-(5Z,8Z,11Z,14Z-eicosatetraenoyl)-sn-glycero-3-phospho-1D-myo-inositol + CoA. The enzyme catalyses 1-(9Z-octadecenoyl)-sn-glycero-3-phospho-L-serine + (5Z,8Z,11Z,14Z)-eicosatetraenoyl-CoA = 1-(9Z-octadecenoyl)-2-(5Z,8Z,11Z,14Z-eicosatetraenoyl)-sn-glycero-3-phospho-L-serine + CoA. It catalyses the reaction 1-hexadecanoyl-sn-glycero-3-phosphate + (9Z)-octadecenoyl-CoA = 1-hexadecanoyl-2-(9Z-octadecenoyl)-sn-glycero-3-phosphate + CoA. The catalysed reaction is 1-hexadecanoyl-sn-glycero-3-phosphate + (5Z,8Z,11Z,14Z)-eicosatetraenoyl-CoA = 1-hexadecanoyl-2-(5Z,8Z,11Z,14Z-eicosatetraenoyl)-sn-glycero-3-phosphate + CoA. It carries out the reaction 1-heptadecanoyl-sn-glycero-3-phosphate + (5Z,8Z,11Z,14Z)-eicosatetraenoyl-CoA = 1-heptadecanoyl-2-(5Z,8Z,11Z,14Z)-eicosatetraenoyl-sn-glycero-3-phosphate + CoA. The enzyme catalyses 1-octadecanoyl-sn-glycero-3-phosphate + (9Z)-octadecenoyl-CoA = 1-octadecanoyl-2-(9Z-octadecenoyl)-sn-glycero-3-phosphate + CoA. It catalyses the reaction 1-octadecanoyl-sn-glycero-3-phosphate + (5Z,8Z,11Z,14Z)-eicosatetraenoyl-CoA = 1-octadecanoyl-2-(5Z,8Z,11Z,14Z-eicosatetraenoyl)-sn-glycero-3-phosphate + CoA. The catalysed reaction is 1-(9Z-octadecenoyl)-sn-glycero-3-phosphate + hexadecanoyl-CoA = 1-hexadecanoyl-2-(9Z-octadecenoyl)-sn-glycero-3-phosphate + CoA. It carries out the reaction 1-O-(9Z-octadecenyl)-sn-glycero-3-phosphate + (5Z,8Z,11Z,14Z)-eicosatetraenoyl-CoA = 1-O-(9Z-octadecenyl)-2-(5Z,8Z,11Z,14Z-eicosatetraenoyl)-sn-glycero-3-phosphate + CoA. The enzyme catalyses a 1-acyl-sn-glycero-3-phospho-(1D-myo-inositol) + (5Z,8Z,11Z,14Z)-eicosatetraenoyl-CoA = a 1-acyl-2-(5Z,8Z,11Z,14Z-eicosatetraenoyl)-sn-glycero-3-phospho-(1D-myo-inositol) + CoA. It participates in phospholipid metabolism; CDP-diacylglycerol biosynthesis; CDP-diacylglycerol from sn-glycerol 3-phosphate: step 2/3. With respect to regulation, in males, activity increases in an age-dependent fashion, maybe derived from the induction by sex-hormones. Its function is as follows. Converts 1-acyl-sn-glycerol-3-phosphate (lysophosphatidic acid or LPA) into 1,2-diacyl-sn-glycerol-3-phosphate (phosphatidic acid or PA) by incorporating an acyl moiety at the sn-2 position of the glycerol backbone. Acts on LPA containing saturated or unsaturated fatty acids C16:0-C20:4 at the sn-1 position using C18:1, C20:4 or C18:2-CoA as the acyl donor. Also acts on lysophosphatidylcholine, lysophosphatidylinositol and lysophosphatidylserine using C18:1 or C20:4-CoA. Has a preference for arachidonoyl-CoA as a donor. Also has a modest lysophosphatidylinositol acyltransferase (LPIAT) activity, converts lysophosphatidylinositol (LPI) into phosphatidylinositol. In Mus musculus (Mouse), this protein is 1-acyl-sn-glycerol-3-phosphate acyltransferase gamma.